The following is a 118-amino-acid chain: Large ribosomal subunit protein bL20 (118 aa).

It belongs to the bacterial ribosomal protein bL20 family.

Binds directly to 23S ribosomal RNA and is necessary for the in vitro assembly process of the 50S ribosomal subunit. It is not involved in the protein synthesizing functions of that subunit. The protein is Large ribosomal subunit protein bL20 of Bacillus mycoides (strain KBAB4) (Bacillus weihenstephanensis).